The primary structure comprises 259 residues: Synaptophysin-like protein 1 (259 aa).

Residues 1–33 (MAPNIYLVRQRISRLGQRMSGFQINLNPLKEPL) lie on the Cytoplasmic side of the membrane. Residues 28-237 (PLKEPLGFIK…NAWFVYKETS (210 aa)) form the MARVEL domain. The chain crosses the membrane as a helical span at residues 34–54 (GFIKVLEWIASIFAFATCGGF). Residues 55–116 (KGQTEIQVNC…LIGDYSSSAQ (62 aa)) lie on the Vesicular side of the membrane. An N-linked (GlcNAc...) asparagine glycan is attached at Asn71. A helical membrane pass occupies residues 117–137 (FYVTFAVFVFLYCIAALLLYV). Residues 138–150 (GYTSLYLDSRKLP) are Cytoplasmic-facing. The chain crosses the membrane as a helical span at residues 151–171 (MIDFVVTLVATFLWLVSTSAW). The Vesicular portion of the chain corresponds to 172–212 (AKALTDIKIATGHNIIDELPPCKKKAVLCYFGSVTSMGSLN). Residue Asn212 is glycosylated (N-linked (GlcNAc...) asparagine). The helical transmembrane segment at 213 to 233 (VSVIFGFLNMILWGGNAWFVY) threads the bilayer. The Cytoplasmic segment spans residues 234–259 (KETSLHSPSNTSAPHSQGGIPPPTGI).

It belongs to the synaptophysin/synaptobrevin family.

It is found in the cytoplasmic vesicle membrane. It localises to the melanosome. The protein is Synaptophysin-like protein 1 (SYPL1) of Homo sapiens (Human).